Reading from the N-terminus, the 262-residue chain is Ornithine carbamoyltransferase (262 aa).

Carbamoyl phosphate-binding positions include 3 to 7 (STRTR), Gln-30, Arg-54, and 81 to 84 (HPTQ). L-ornithine contacts are provided by residues Asn-114, Asp-178, and 182–183 (SM). Carbamoyl phosphate contacts are provided by residues 219–222 (HCLP) and Thr-247.

This sequence belongs to the aspartate/ornithine carbamoyltransferase superfamily. OTCase family.

It is found in the cytoplasm. It carries out the reaction carbamoyl phosphate + L-ornithine = L-citrulline + phosphate + H(+). The protein operates within amino-acid biosynthesis; L-arginine biosynthesis; L-arginine from L-ornithine and carbamoyl phosphate: step 1/3. Its function is as follows. Reversibly catalyzes the transfer of the carbamoyl group from carbamoyl phosphate (CP) to the N(epsilon) atom of ornithine (ORN) to produce L-citrulline. The polypeptide is Ornithine carbamoyltransferase (argF) (Neisseria lactamica).